A 337-amino-acid polypeptide reads, in one-letter code: B1 bradykinin receptor (337 aa).

Over 1–41 (MASEVLLELQPSNRSLQAPANITSCESALEDWDLLYRVLPG) the chain is Extracellular. Residues Asn13 and Asn21 are each glycosylated (N-linked (GlcNAc...) asparagine). Residues 42-62 (FVITICFFGLLGNLLVLSFFL) traverse the membrane as a helical segment. Residues 63–83 (LPWRQWWWQQRQRQQRLTIAE) lie on the Cytoplasmic side of the membrane. The helical transmembrane segment at 84-104 (IYLANLAASDLVFVLGLPFWA) threads the bilayer. Over 105-121 (ENIGNRFNWPFGTDLCR) the chain is Extracellular. Cys120 and Cys199 are disulfide-bonded. The chain crosses the membrane as a helical span at residues 122 to 142 (VVSGVIKANLFVSIFLVVAIS). Residues 143–164 (QDRYRLLVYPMTSWGYRRRRQA) lie on the Cytoplasmic side of the membrane. Residues 165-185 (QATCLLIWVAGGLLSIPTFLL) form a helical membrane-spanning segment. Residues 186 to 217 (RSVKVVPDLNVSACILLFPHEAWHFARMVELN) lie on the Extracellular side of the membrane. Asn195 carries an N-linked (GlcNAc...) asparagine glycan. Residues 218–238 (VLGFLLPVTAIIFFNYHILAS) form a helical membrane-spanning segment. Over 239–261 (LRGQKEASRTRCGGPKGSKTTGL) the chain is Cytoplasmic. A helical transmembrane segment spans residues 262-282 (ILTLVASFLVCWCPYHFFAFL). The Extracellular segment spans residues 283–305 (DFLVQVRVIQDCSWKEITDLGLQ). A helical transmembrane segment spans residues 306–326 (LANFFAFVNSCLNPLIYVFAG). Residues 327-337 (RLLKTRVLGTL) lie on the Cytoplasmic side of the membrane.

Belongs to the G-protein coupled receptor 1 family. Bradykinin receptor subfamily. BDKRB1 sub-subfamily. Expressed in bladder, lung, duodenum, kidney, uterus, thymus, salivary gland, testis, prostate, macrophages, aorta, spleen and heart.

Its subcellular location is the cell membrane. Functionally, this is a receptor for bradykinin. Could be a factor in chronic pain and inflammation. In Rattus norvegicus (Rat), this protein is B1 bradykinin receptor (Bdkrb1).